The sequence spans 473 residues: MTTVMKFGGTSVGSGERIRHVAKIVTKRKKEDDDVVVVVSAMSEVTNALVEISQQALDVRDIAKVGDFIKFIREKHYKAIEEAIKSEEIKEEVKKIIDSRIEELEKVLIGVAYLGELTPKSRDYILSFGERLSSPILSGAIRDLGEKSIALEGGEAGIITDNNFGSARVKRLEVKERLLPLLKEGIIPVVTGFIGTTEEGYITTLGRGGSDYSAALIGYGLDADIIEIWTDVSGVYTTDPRLVPTARRIPKLSYIEAMELAYFGAKVLHPRTIEPAMEKGIPILVKNTFEPESEGTLITNDMEMSDSIVKAISTIKNVALINIFGAGMVGVSGTAARIFKALGEEEVNVILISQGSSETNISLVVSEEDVDKALKALKREFGDFGKKSFLNNNLIRDVSVDKDVCVISVVGAGMRGAKGIAGKIFTAVSESGANIKMIAQGSSEVNISFVIDEKDLLNCVRKLHEKFIEKTNS.

ACT domains lie at 323-392 (IFGA…FLNN) and 409-473 (VVGA…KTNS).

This sequence belongs to the aspartokinase family.

The catalysed reaction is L-aspartate + ATP = 4-phospho-L-aspartate + ADP. It functions in the pathway amino-acid biosynthesis; L-lysine biosynthesis via DAP pathway; (S)-tetrahydrodipicolinate from L-aspartate: step 1/4. It participates in amino-acid biosynthesis; L-methionine biosynthesis via de novo pathway; L-homoserine from L-aspartate: step 1/3. Its pathway is amino-acid biosynthesis; L-threonine biosynthesis; L-threonine from L-aspartate: step 1/5. This Methanocaldococcus jannaschii (strain ATCC 43067 / DSM 2661 / JAL-1 / JCM 10045 / NBRC 100440) (Methanococcus jannaschii) protein is Probable aspartokinase.